The following is a 322-amino-acid chain: Cytochrome c biogenesis protein CcsA (322 aa).

A run of 7 helical transmembrane segments spans residues 9-29 (ILTH…LITL), 43-63 (GMIA…IYSG), 70-90 (LYES…VPKI), 142-162 (MLLS…LLVI), 226-246 (VISL…VWAN), 259-274 (ETWA…IYSH), and 287-307 (AIVA…VNLL).

Belongs to the CcmF/CycK/Ccl1/NrfE/CcsA family. May interact with Ccs1.

It localises to the plastid. The protein localises to the chloroplast thylakoid membrane. Required during biogenesis of c-type cytochromes (cytochrome c6 and cytochrome f) at the step of heme attachment. This Chloranthus spicatus (Chulantree) protein is Cytochrome c biogenesis protein CcsA.